Reading from the N-terminus, the 108-residue chain is Class I hydrophobin 3 (108 aa).

The N-terminal stretch at 1-17 (MFFQTTIVAALAFLAVA) is a signal peptide. 4 cysteine pairs are disulfide-bonded: C28/C87, C35/C81, C36/C69, and C88/C101. N37 carries N-linked (GlcNAc...) asparagine glycosylation.

This sequence belongs to the fungal hydrophobin family. Self-assembles to form functional amyloid fibrils called rodlets. Self-assembly into fibrillar rodlets occurs spontaneously at hydrophobic:hydrophilic interfaces and the rodlets further associate laterally to form amphipathic monolayers.

The protein localises to the secreted. It is found in the cell wall. In terms of biological role, aerial growth, conidiation, and dispersal of filamentous fungi in the environment rely upon a capability of their secreting small amphipathic proteins called hydrophobins (HPBs) with low sequence identity. Class I can self-assemble into an outermost layer of rodlet bundles on aerial cell surfaces, conferring cellular hydrophobicity that supports fungal growth, development and dispersal; whereas Class II form highly ordered films at water-air interfaces through intermolecular interactions but contribute nothing to the rodlet structure. Vmh3 is a class I hydrophobin that is essential for the maintenance of the surface hydrophobicity of the mycelium and might be involved in the development of fruiting bodies. Plays an important role in hyphal resistance against environmental stress. Necessary for the efficient biodegradation of lignin. This chain is Class I hydrophobin 3, found in Pleurotus ostreatus (Oyster mushroom).